The chain runs to 88 residues: UPF0250 protein PM1928 (88 aa).

Belongs to the UPF0250 family.

The chain is UPF0250 protein PM1928 from Pasteurella multocida (strain Pm70).